A 702-amino-acid polypeptide reads, in one-letter code: ATP-dependent RNA helicase DDX4 (702 aa).

The interval 22–228 (FEKDKYSSGA…YIPPPPPEDE (207 aa)) is disordered. Residues 29-46 (SGANGDTFNRTSASSDIG) are compositionally biased toward polar residues. Composition is skewed to gly residues over residues 58–68 (GGFGRGKGFGN) and 125–137 (RGSFRGCRGGFGL). 2 stretches are compositionally biased toward polar residues: residues 141–150 (NSESDQDQGT) and 195–215 (SGKNSWKSETEGGESSDSQGP). Phosphoserine is present on residues S195 and S199. Positions 201–220 (KSETEGGESSDSQGPKVTYI) are interaction with RANBP9. A Q motif motif is present at residues 261–289 (LTFEEANLCQTLNNNIAKAGYTKLTPVQK). One can recognise a Helicase ATP-binding domain in the interval 292–475 (IPIVLAGRDL…GDFLKSSYLF (184 aa)). 305-312 (AQTGSGKT) contributes to the ATP binding site. The DEAD box motif lies at 419–422 (DEAD). The 146-residue stretch at 503–648 (KLVEILRNIG…DVPAWLEEIA (146 aa)) folds into the Helicase C-terminal domain. Positions 681–693 (TLNTAGISSSQAP) are enriched in polar residues. A disordered region spans residues 681–702 (TLNTAGISSSQAPNPVDDESWD). Residue S700 is modified to Phosphoserine.

This sequence belongs to the DEAD box helicase family. DDX4/VASA subfamily. As to quaternary structure, found in a mRNP complex, at least composed of TDRD1, TDRD6, TDRD7 and DDX4. Interacts with RANBP9. Interacts with RANBP10. Interacts with PIWIL2 and MAEL. Interacts with BMAL1 and CLOCK. Interacts with Tex19.1 and, probably, Tex19.2. Interacts with RBM46. Testis-specific.

The protein resides in the cytoplasm. It localises to the perinuclear region. It catalyses the reaction ATP + H2O = ADP + phosphate + H(+). In terms of biological role, ATP-dependent RNA helicase required during spermatogenesis to repress transposable elements and preventing their mobilization, which is essential for the germline integrity. Acts via the piRNA metabolic process, which mediates the repression of transposable elements during meiosis by forming complexes composed of piRNAs and Piwi proteins and governs the methylation and subsequent repression of transposons. Involved in the secondary piRNAs metabolic process, the production of piRNAs in fetal male germ cells through a ping-pong amplification cycle. Required for PIWIL2 slicing-triggered piRNA biogenesis: helicase activity enables utilization of one of the slice cleavage fragments generated by PIWIL2 and processing these pre-piRNAs into piRNAs. This is ATP-dependent RNA helicase DDX4 from Mus musculus (Mouse).